The following is a 208-amino-acid chain: Uracil phosphoribosyltransferase (208 aa).

Residues Arg78, Arg103, and Asp130–Ser138 contribute to the 5-phospho-alpha-D-ribose 1-diphosphate site. Uracil is bound by residues Ile193 and Gly198–Ala200. Asp199 contacts 5-phospho-alpha-D-ribose 1-diphosphate.

It belongs to the UPRTase family. It depends on Mg(2+) as a cofactor.

It carries out the reaction UMP + diphosphate = 5-phospho-alpha-D-ribose 1-diphosphate + uracil. It participates in pyrimidine metabolism; UMP biosynthesis via salvage pathway; UMP from uracil: step 1/1. Allosterically activated by GTP. Functionally, catalyzes the conversion of uracil and 5-phospho-alpha-D-ribose 1-diphosphate (PRPP) to UMP and diphosphate. The protein is Uracil phosphoribosyltransferase of Haemophilus influenzae (strain 86-028NP).